The following is a 287-amino-acid chain: ADP-dependent (S)-NAD(P)H-hydrate dehydratase (287 aa).

One can recognise a YjeF C-terminal domain in the interval 7–283 (GEDDVRKFVP…ELLPSVMKPF (277 aa)). (6S)-NADPHX-binding residues include Ala42 and His159. Residues 196–200 (KGPTD) and Gly224 each bind AMP. Asp225 is a (6S)-NADPHX binding site.

The protein belongs to the NnrD/CARKD family. Homotetramer. It depends on Mg(2+) as a cofactor.

It carries out the reaction (6S)-NADHX + ADP = AMP + phosphate + NADH + H(+). The enzyme catalyses (6S)-NADPHX + ADP = AMP + phosphate + NADPH + H(+). Functionally, catalyzes the dehydration of the S-form of NAD(P)HX at the expense of ADP, which is converted to AMP. Together with NAD(P)HX epimerase, which catalyzes the epimerization of the S- and R-forms, the enzyme allows the repair of both epimers of NAD(P)HX, a damaged form of NAD(P)H that is a result of enzymatic or heat-dependent hydration. The sequence is that of ADP-dependent (S)-NAD(P)H-hydrate dehydratase from Cenarchaeum symbiosum (strain A).